Reading from the N-terminus, the 448-residue chain is Phosphoglucosamine mutase (448 aa).

Serine 100 functions as the Phosphoserine intermediate in the catalytic mechanism. 4 residues coordinate Mg(2+): serine 100, aspartate 240, aspartate 242, and aspartate 244. Serine 100 is modified (phosphoserine).

The protein belongs to the phosphohexose mutase family. Mg(2+) serves as cofactor. Activated by phosphorylation.

The enzyme catalyses alpha-D-glucosamine 1-phosphate = D-glucosamine 6-phosphate. Catalyzes the conversion of glucosamine-6-phosphate to glucosamine-1-phosphate. In Bacillus licheniformis (strain ATCC 14580 / DSM 13 / JCM 2505 / CCUG 7422 / NBRC 12200 / NCIMB 9375 / NCTC 10341 / NRRL NRS-1264 / Gibson 46), this protein is Phosphoglucosamine mutase.